The primary structure comprises 364 residues: UDP-N-acetylglucosamine--N-acetylmuramyl-(pentapeptide) pyrophosphoryl-undecaprenol N-acetylglucosamine transferase (364 aa).

UDP-N-acetyl-alpha-D-glucosamine is bound by residues 10 to 12 (TGG), Asn124, Ser195, and Gln295.

Belongs to the glycosyltransferase 28 family. MurG subfamily.

It is found in the cell membrane. The catalysed reaction is di-trans,octa-cis-undecaprenyl diphospho-N-acetyl-alpha-D-muramoyl-L-alanyl-D-glutamyl-meso-2,6-diaminopimeloyl-D-alanyl-D-alanine + UDP-N-acetyl-alpha-D-glucosamine = di-trans,octa-cis-undecaprenyl diphospho-[N-acetyl-alpha-D-glucosaminyl-(1-&gt;4)]-N-acetyl-alpha-D-muramoyl-L-alanyl-D-glutamyl-meso-2,6-diaminopimeloyl-D-alanyl-D-alanine + UDP + H(+). The protein operates within cell wall biogenesis; peptidoglycan biosynthesis. Its function is as follows. Cell wall formation. Catalyzes the transfer of a GlcNAc subunit on undecaprenyl-pyrophosphoryl-MurNAc-pentapeptide (lipid intermediate I) to form undecaprenyl-pyrophosphoryl-MurNAc-(pentapeptide)GlcNAc (lipid intermediate II). In Bacillus pumilus (strain SAFR-032), this protein is UDP-N-acetylglucosamine--N-acetylmuramyl-(pentapeptide) pyrophosphoryl-undecaprenol N-acetylglucosamine transferase.